The sequence spans 298 residues: GTPase Era (298 aa).

The 169-residue stretch at 8–176 (HCGSVAVIGR…VRDVLKLLPE (169 aa)) folds into the Era-type G domain. Residues 16-23 (GRPNVGKS) form a G1 region. 16 to 23 (GRPNVGKS) serves as a coordination point for GTP. The interval 42–46 (QTTRH) is G2. The G3 stretch occupies residues 63 to 66 (DTPG). GTP is bound by residues 63-67 (DTPGL) and 125-128 (NKID). The G4 stretch occupies residues 125–128 (NKID). Positions 155–157 (ISA) are G5. Positions 199–283 (VREQLMRQLG…FLETWVRVRE (85 aa)) constitute a KH type-2 domain.

Belongs to the TRAFAC class TrmE-Era-EngA-EngB-Septin-like GTPase superfamily. Era GTPase family. In terms of assembly, monomer.

The protein localises to the cytoplasm. Its subcellular location is the cell inner membrane. Functionally, an essential GTPase that binds both GDP and GTP, with rapid nucleotide exchange. Plays a role in 16S rRNA processing and 30S ribosomal subunit biogenesis and possibly also in cell cycle regulation and energy metabolism. The protein is GTPase Era of Stenotrophomonas maltophilia (strain K279a).